Here is a 366-residue protein sequence, read N- to C-terminus: UDP-N-acetylglucosamine--N-acetylmuramyl-(pentapeptide) pyrophosphoryl-undecaprenol N-acetylglucosamine transferase (366 aa).

Residues 10–12, Asn-124, Arg-165, Ser-192, Ile-247, and Gln-292 contribute to the UDP-N-acetyl-alpha-D-glucosamine site; that span reads TGG.

It belongs to the glycosyltransferase 28 family. MurG subfamily.

Its subcellular location is the cell inner membrane. It catalyses the reaction di-trans,octa-cis-undecaprenyl diphospho-N-acetyl-alpha-D-muramoyl-L-alanyl-D-glutamyl-meso-2,6-diaminopimeloyl-D-alanyl-D-alanine + UDP-N-acetyl-alpha-D-glucosamine = di-trans,octa-cis-undecaprenyl diphospho-[N-acetyl-alpha-D-glucosaminyl-(1-&gt;4)]-N-acetyl-alpha-D-muramoyl-L-alanyl-D-glutamyl-meso-2,6-diaminopimeloyl-D-alanyl-D-alanine + UDP + H(+). Its pathway is cell wall biogenesis; peptidoglycan biosynthesis. In terms of biological role, cell wall formation. Catalyzes the transfer of a GlcNAc subunit on undecaprenyl-pyrophosphoryl-MurNAc-pentapeptide (lipid intermediate I) to form undecaprenyl-pyrophosphoryl-MurNAc-(pentapeptide)GlcNAc (lipid intermediate II). The sequence is that of UDP-N-acetylglucosamine--N-acetylmuramyl-(pentapeptide) pyrophosphoryl-undecaprenol N-acetylglucosamine transferase from Geotalea daltonii (strain DSM 22248 / JCM 15807 / FRC-32) (Geobacter daltonii).